Consider the following 157-residue polypeptide: UPF0212 protein rrnAC1165 (157 aa).

Positions 105 to 157 (VLEIEEIPEESDETTEDESSSAESEADADDPPSDQSADESDDVLPEFEELIDE) are disordered. The span at 106–157 (LEIEEIPEESDETTEDESSSAESEADADDPPSDQSADESDDVLPEFEELIDE) shows a compositional bias: acidic residues.

This sequence belongs to the UPF0212 family.

The polypeptide is UPF0212 protein rrnAC1165 (Haloarcula marismortui (strain ATCC 43049 / DSM 3752 / JCM 8966 / VKM B-1809) (Halobacterium marismortui)).